The following is a 355-amino-acid chain: Ataxin-3-like protein (355 aa).

The Josephin domain occupies 1-180 (MDFIFHEKQE…DCEADQLLQI (180 aa)). Cys-14 acts as the Nucleophile in catalysis. His-119 (proton acceptor) is an active-site residue. Residue Asn-134 is part of the active site. Disordered regions lie at residues 209–230 (LEKV…EDFQ) and 253–331 (LSMQ…DISE). The segment covering 215–228 (ESDESGTSDQDEED) has biased composition (acidic residues). 2 consecutive UIM domains span residues 224-243 (QDEE…TNRE) and 244-258 (DEHL…MQGS). The span at 253-276 (LSMQGSSGNTSQDLPKTSCVTPAS) shows a compositional bias: polar residues. Residues 278–293 (QPKKIKEDYFEKHQQE) are compositionally biased toward basic and acidic residues.

Widely expressed.

It is found in the nucleus. It carries out the reaction Thiol-dependent hydrolysis of ester, thioester, amide, peptide and isopeptide bonds formed by the C-terminal Gly of ubiquitin (a 76-residue protein attached to proteins as an intracellular targeting signal).. Functionally, deubiquitinating enzyme that cleaves both 'Lys-48'-linked and 'Lys-63'-linked poly-ubiquitin chains (in vitro). Acts as a deubiquitinating enzyme for the transcription factor KLF5, playing a role in the regulation of KLF5 stability. In Homo sapiens (Human), this protein is Ataxin-3-like protein.